A 655-amino-acid polypeptide reads, in one-letter code: Ankyrin repeat and SAM domain-containing protein 3 (655 aa).

An interaction with NEK7 region spans residues 1–421; the sequence is MSELSDEASE…PGSEPQTEKS (421 aa). Phosphoserine occurs at positions 2 and 5. 6 ANK repeats span residues 34–64, 68–97, 101–130, 134–163, 168–197, and 201–220; these read DVPLDLHTAASIGQHEVVKECVQRGELDLNK, GGWTALMYASYIGHDTIVHLLLEAGVSVNV, EGQTPLMLASSCGNESIAYFLLQQGAELEM, HGWTALFHCTSAGHQQMVKFLLESGANANV, YGYTPLMEAAASGHEIIVQYFLNHGVKVDT, and SGATACMLARQFGHMKIVAL. A 3-hydroxyasparagine modification is found at Asn-96. Phosphoserine occurs at positions 201, 225, 243, 244, and 245. Residues 314 to 426 form a disordered region; the sequence is YRDVTSPINE…QTEKSPYSGP (113 aa). Position 318 is a phosphothreonine (Thr-318). Ser-319, Ser-366, Ser-369, and Ser-373 each carry phosphoserine. Basic residues predominate over residues 378–395; the sequence is KSSVRKQTRSYLKNKSRH. The 64-residue stretch at 424-487 folds into the SAM domain; that stretch reads SGPQDLATLL…TSAIARWHSS (64 aa). A coiled-coil region spans residues 500-575; that stretch reads ADRLETEMQE…AALVLDQLRA (76 aa). Position 540 is a phosphoserine (Ser-540).

In terms of assembly, homooligomer. Interacts (via SAM domain) with ANKS6 (via SAM domain). Interacts with BICC1. Interacts with NPHP1. Interacts with NEK8. Interacts with HIF1AN. Interacts with NEK7; this interaction alters the subcellular distribution of NEK7 by preventing its nuclear translocation. Post-translationally, hydroxylated at Asn-96, most probably by HIF1AN. In terms of processing, phosphorylations at Ser-5, Ser-225, Thr-318, Ser-319, Ser-366 and Ser-369 occur in a NEK7-dependent manner. Polyubiquitinated. Kidney (at protein level).

The protein localises to the cell projection. It localises to the cilium. The protein resides in the cytoplasm. In terms of biological role, may be involved in vasopressin signaling in the kidney. The sequence is that of Ankyrin repeat and SAM domain-containing protein 3 (Anks3) from Mus musculus (Mouse).